We begin with the raw amino-acid sequence, 527 residues long: UPF0053 protein YegH (527 aa).

7 helical membrane passes run 14 to 34 (ITLIVIELVLGIDNLVFIAIL), 51 to 71 (LLLAMLMRLLLLASISWLVTL), 81 to 101 (FTFSARDLIMLFGGFFLLFKA), 122 to 142 (GAKFWGVVTQIVVLDAIFSLD), 145 to 165 (ITAVGMVDHLLVMMAAVVIAI), 185 to 205 (IVILCLSFLLMIGFSLVAEGF), and 207 to 227 (FVIPKGYLYAAIGFSVMIEAL). CBS domains are found at residues 306 to 366 (MTSR…GEPL) and 371 to 429 (LIRQ…PNEV).

The protein belongs to the UPF0053 family.

The protein localises to the cell membrane. In Shigella flexneri, this protein is UPF0053 protein YegH (yegH).